A 186-amino-acid chain; its full sequence is TATA box-binding protein-like 1 (186 aa).

It belongs to the TBP family. In terms of assembly, binds TFIIA and TFIIB.

The protein resides in the cytoplasm. The protein localises to the nucleus. Part of a specialized transcription system that mediates the transcription of most ribosomal proteins through the 5'-TCT-3' motif which is a core promoter element at these genes. Seems to also mediate the transcription of NF1. Does not bind the TATA box. In Bos taurus (Bovine), this protein is TATA box-binding protein-like 1 (TBPL1).